The primary structure comprises 141 residues: Hemoglobin subunit alpha (141 aa).

The Globin domain maps to 1–141 (VLSPEDKNHV…VSTVLTSKYR (141 aa)). S3 is subject to Phosphoserine. K7 is subject to N6-succinyllysine. Residue K16 is modified to N6-acetyllysine; alternate. At K16 the chain carries N6-succinyllysine; alternate. Residue Y24 is modified to Phosphotyrosine. Position 35 is a phosphoserine (S35). K40 is subject to N6-succinyllysine. S49 is modified (phosphoserine). Residue H58 coordinates O2. H87 serves as a coordination point for heme b. S102 carries the post-translational modification Phosphoserine. The residue at position 108 (T108) is a Phosphothreonine. Phosphoserine occurs at positions 124 and 131. Residues T134 and T137 each carry the phosphothreonine modification. S138 is subject to Phosphoserine.

It belongs to the globin family. Heterotetramer of two alpha chains and two beta chains. Red blood cells.

Its function is as follows. Involved in oxygen transport from the lung to the various peripheral tissues. In terms of biological role, hemopressin acts as an antagonist peptide of the cannabinoid receptor CNR1. Hemopressin-binding efficiently blocks cannabinoid receptor CNR1 and subsequent signaling. In Spalax ehrenbergi (Middle East blind mole rat), this protein is Hemoglobin subunit alpha (HBA).